Here is a 131-residue protein sequence, read N- to C-terminus: Small ribosomal subunit protein eS8 (131 aa).

Residues 1-37 (MKLGAFYKGGDLKKPSGGKKRRVRRTKKKALGGGPPQ) form a disordered region. A compositionally biased stretch (basic residues) spans 16–30 (SGGKKRRVRRTKKKA).

This sequence belongs to the eukaryotic ribosomal protein eS8 family. Part of the 30S ribosomal subunit.

This Pyrobaculum neutrophilum (strain DSM 2338 / JCM 9278 / NBRC 100436 / V24Sta) (Thermoproteus neutrophilus) protein is Small ribosomal subunit protein eS8.